We begin with the raw amino-acid sequence, 302 residues long: Acetylglutamate kinase (302 aa).

Substrate contacts are provided by residues 68-69, R90, and N195; that span reads GG.

This sequence belongs to the acetylglutamate kinase family. ArgB subfamily.

The protein resides in the cytoplasm. It carries out the reaction N-acetyl-L-glutamate + ATP = N-acetyl-L-glutamyl 5-phosphate + ADP. Its pathway is amino-acid biosynthesis; L-arginine biosynthesis; N(2)-acetyl-L-ornithine from L-glutamate: step 2/4. Functionally, catalyzes the ATP-dependent phosphorylation of N-acetyl-L-glutamate. The polypeptide is Acetylglutamate kinase (Marinomonas sp. (strain MWYL1)).